The primary structure comprises 119 residues: Basic phospholipase A2 (119 aa).

7 disulfides stabilise this stretch: Cys-11–Cys-71, Cys-27–Cys-118, Cys-29–Cys-45, Cys-44–Cys-99, Cys-51–Cys-92, Cys-60–Cys-85, and Cys-78–Cys-90. Ca(2+) contacts are provided by Tyr-28, Gly-30, and Gly-32. His-48 is an active-site residue. Asp-49 is a Ca(2+) binding site. Asp-93 is an active-site residue.

Belongs to the phospholipase A2 family. Group I subfamily. D49 sub-subfamily. Ca(2+) is required as a cofactor. In terms of tissue distribution, expressed by the venom gland.

Its subcellular location is the secreted. The enzyme catalyses a 1,2-diacyl-sn-glycero-3-phosphocholine + H2O = a 1-acyl-sn-glycero-3-phosphocholine + a fatty acid + H(+). Functionally, snake venom phospholipase A2 (PLA2) that has several activities. It is myotoxic, has weak anticoagulant activity and inhibits neuromuscular transmission by blocking acetylcholine release from the nerve termini. PLA2 catalyzes the calcium-dependent hydrolysis of the 2-acyl groups in 3-sn-phosphoglycerides. The polypeptide is Basic phospholipase A2 (Hydrophis schistosus (Beaked sea snake)).